We begin with the raw amino-acid sequence, 388 residues long: Trichodiene synthase (388 aa).

Mg(2+) contacts are provided by Asp109, Glu173, Asn234, Ser238, Glu242, and Asp248. The interval 109–113 (DDSRE) is aspartate-rich domain.

The protein belongs to the trichodiene synthase family. Mg(2+) serves as cofactor. The cofactor is Mn(2+).

The enzyme catalyses (2E,6E)-farnesyl diphosphate = trichodiene + diphosphate. The protein operates within sesquiterpene biosynthesis; trichothecene biosynthesis. Functionally, trichodiene synthase; part of the gene cluster that mediates the production of the antimicrobial trichothecene harzianum A (HA) that plays a role in Botrytis cinerea antagonistic activity and plant defense priming. The biosynthesis of harzianum A begins with the cyclization of farnesyl diphosphate to trichodiene and is catalyzed by the trichodiene synthase TRI5. Trichodiene undergoes a series of oxygenations catalyzed by the cytochrome P450 monooxygenase TRI4. TRI4 controls the addition of 3 oxygens at C-2, C-11, and the C-12, C-13-epoxide to form the intermediate isotrichodiol. Isotrichodiol then undergoes a non-enzymatic isomerization and cyclization to form 12,13-epoxytrichothec-9-ene (EPT) which is further converted to trichodermol by the cytochrome P450 monooxygenase TRI11 via C-4 hydroxylation. The last step of HA synthesis is esterification of an octatriendioyl moiety to the C-4 oxygen of trichodermol. The octatriendioyl moiety is probably produced by the polyketide synthase TRI17 and the esterification performed by the trichothecene O-acetyltransferase TRI3. In Trichoderma arundinaceum, this protein is Trichodiene synthase.